Consider the following 393-residue polypeptide: Glutamate 5-kinase 1 (393 aa).

Position 17 (Lys-17) interacts with ATP. Residues Ser-57, Asp-144, and Asn-156 each contribute to the substrate site. Position 176 to 177 (176 to 177 (SD)) interacts with ATP. The region spanning 282 to 359 (AGSLSIDAGA…AEIAAILGYA (78 aa)) is the PUA domain.

It belongs to the glutamate 5-kinase family.

It is found in the cytoplasm. The catalysed reaction is L-glutamate + ATP = L-glutamyl 5-phosphate + ADP. The protein operates within amino-acid biosynthesis; L-proline biosynthesis; L-glutamate 5-semialdehyde from L-glutamate: step 1/2. In terms of biological role, catalyzes the transfer of a phosphate group to glutamate to form L-glutamate 5-phosphate. The protein is Glutamate 5-kinase 1 of Rhizobium meliloti (strain 1021) (Ensifer meliloti).